Reading from the N-terminus, the 524-residue chain is Bifunctional purine biosynthesis protein PurH (524 aa).

An MGS-like domain is found at methionine 1–threonine 149.

It belongs to the PurH family.

It catalyses the reaction (6R)-10-formyltetrahydrofolate + 5-amino-1-(5-phospho-beta-D-ribosyl)imidazole-4-carboxamide = 5-formamido-1-(5-phospho-D-ribosyl)imidazole-4-carboxamide + (6S)-5,6,7,8-tetrahydrofolate. The enzyme catalyses IMP + H2O = 5-formamido-1-(5-phospho-D-ribosyl)imidazole-4-carboxamide. Its pathway is purine metabolism; IMP biosynthesis via de novo pathway; 5-formamido-1-(5-phospho-D-ribosyl)imidazole-4-carboxamide from 5-amino-1-(5-phospho-D-ribosyl)imidazole-4-carboxamide (10-formyl THF route): step 1/1. It functions in the pathway purine metabolism; IMP biosynthesis via de novo pathway; IMP from 5-formamido-1-(5-phospho-D-ribosyl)imidazole-4-carboxamide: step 1/1. The sequence is that of Bifunctional purine biosynthesis protein PurH from Chlorobium phaeovibrioides (strain DSM 265 / 1930) (Prosthecochloris vibrioformis (strain DSM 265)).